The chain runs to 199 residues: UPF0637 protein YsbB (199 aa).

The protein belongs to the UPF0637 family.

The protein is UPF0637 protein YsbB (ysbB) of Lactococcus lactis subsp. lactis (strain IL1403) (Streptococcus lactis).